Consider the following 504-residue polypeptide: Aspartyl/glutamyl-tRNA(Asn/Gln) amidotransferase subunit B (504 aa).

This sequence belongs to the GatB/GatE family. GatB subfamily. In terms of assembly, heterotrimer of A, B and C subunits.

The enzyme catalyses L-glutamyl-tRNA(Gln) + L-glutamine + ATP + H2O = L-glutaminyl-tRNA(Gln) + L-glutamate + ADP + phosphate + H(+). The catalysed reaction is L-aspartyl-tRNA(Asn) + L-glutamine + ATP + H2O = L-asparaginyl-tRNA(Asn) + L-glutamate + ADP + phosphate + 2 H(+). Its function is as follows. Allows the formation of correctly charged Asn-tRNA(Asn) or Gln-tRNA(Gln) through the transamidation of misacylated Asp-tRNA(Asn) or Glu-tRNA(Gln) in organisms which lack either or both of asparaginyl-tRNA or glutaminyl-tRNA synthetases. The reaction takes place in the presence of glutamine and ATP through an activated phospho-Asp-tRNA(Asn) or phospho-Glu-tRNA(Gln). This is Aspartyl/glutamyl-tRNA(Asn/Gln) amidotransferase subunit B from Rhodococcus opacus (strain B4).